A 642-amino-acid polypeptide reads, in one-letter code: Palmitoyltransferase akr1 (642 aa).

ANK repeat units follow at residues 1 to 29, 33 to 62, 67 to 96, 100 to 129, 133 to 162, and 166 to 196; these read MGSL…DVNA, GGAT…DVNA, LQAA…DPLL, QGFN…SVDL, QQHT…DVLA, and DKMT…PCTA. Topologically, residues 1–256 are cytoplasmic; that stretch reads MGSLFLAASQ…SKFQFSQKTF (256 aa). The next 2 helical transmembrane spans lie at 257–277 and 278–298; these read IIFC…IMSI and CPMV…FKYI. Topologically, residues 299-316 are cytoplasmic; the sequence is TTCIHANIDIVHFYLETP. A helical membrane pass occupies residues 317–337; sequence FLAGIFSSIFFWVWCHSLLYI. Over 338 to 343 the chain is Lumenal; sequence VPKTLP. Residues 344–364 form a helical membrane-spanning segment; sequence IKPLSSLLFVLISFTCIGLYV. The Cytoplasmic portion of the chain corresponds to 365–444; that stretch reads RTAFQNPGYV…NCVGARNHRT (80 aa). The DHHC domain maps to 400–450; that stretch reads HYCLKCFQVKPPRSYHCGACKRCINRYDHHCPWTGNCVGARNHRTFLLFVF. Cysteine 430 serves as the catalytic S-palmitoyl cysteine intermediate. A helical transmembrane segment spans residues 445-465; that stretch reads FLLFVFTLSTLIPIYFYVAFY. Topologically, residues 466–496 are lumenal; the sequence is YLQNIPIQKKYESYRCLFISGTICQWSLKDM. The helical transmembrane segment at 497 to 517 threads the bilayer; that stretch reads FVLVASLTLFVNWCWVVVLAF. At 518-642 the chain is on the cytoplasmic side; sequence TQICQVAHNV…GRQDEATRHV (125 aa).

This sequence belongs to the DHHC palmitoyltransferase family. AKR/ZDHHC17 subfamily.

The protein localises to the early endosome membrane. Its subcellular location is the golgi apparatus membrane. It catalyses the reaction L-cysteinyl-[protein] + hexadecanoyl-CoA = S-hexadecanoyl-L-cysteinyl-[protein] + CoA. In terms of biological role, palmitoyltransferase specific for casein kinase 1. This chain is Palmitoyltransferase akr1 (akr1), found in Schizosaccharomyces pombe (strain 972 / ATCC 24843) (Fission yeast).